The following is a 110-amino-acid chain: MEAKAIVRYVRIAPRKAQQVVDLVRGKKVDEALAILKYTPKAAAPIVEKLVKSAVANAENNNGMDIDRLYISEIYANQGPTMKRFRPRAMGRATTIRKRTSHIEVVLKEK.

Belongs to the universal ribosomal protein uL22 family. In terms of assembly, part of the 50S ribosomal subunit.

Its function is as follows. This protein binds specifically to 23S rRNA; its binding is stimulated by other ribosomal proteins, e.g. L4, L17, and L20. It is important during the early stages of 50S assembly. It makes multiple contacts with different domains of the 23S rRNA in the assembled 50S subunit and ribosome. Functionally, the globular domain of the protein is located near the polypeptide exit tunnel on the outside of the subunit, while an extended beta-hairpin is found that lines the wall of the exit tunnel in the center of the 70S ribosome. The sequence is that of Large ribosomal subunit protein uL22 from Alkaliphilus oremlandii (strain OhILAs) (Clostridium oremlandii (strain OhILAs)).